The following is a 115-amino-acid chain: Replication initiation control protein YabA (115 aa).

Residues H90, C92, C106, and C109 each contribute to the Zn(2+) site.

The protein belongs to the YabA family. As to quaternary structure, homotetramer. Interacts with both DnaA and DnaN, acting as a bridge between these two proteins. It depends on Zn(2+) as a cofactor.

Its subcellular location is the cytoplasm. The protein localises to the nucleoid. In terms of biological role, involved in control of chromosome replication initiation. Inhibits the cooperative binding of DnaA to the oriC region, thus negatively regulating initiation of chromosome replication. Inhibits the ability of DnaA-ATP to form a helix on DNA; does not disassemble preformed DnaA-DNA helices. Decreases the residence time of DnaA on the chromosome at its binding sites (oriC, replication forks and promoter-binding sites). Tethers DnaA to the replication machinery via the DNA polymerase beta sliding clamp subunit (dnaN). Associates with oriC and other DnaA targets on the chromosome in a DnaA-dependent manner. This chain is Replication initiation control protein YabA, found in Staphylococcus epidermidis (strain ATCC 35984 / DSM 28319 / BCRC 17069 / CCUG 31568 / BM 3577 / RP62A).